The following is a 675-amino-acid chain: DNA ligase (675 aa).

NAD(+) is bound by residues 41–45 (DAEYD), 90–91 (SL), and glutamate 120. Lysine 122 functions as the N6-AMP-lysine intermediate in the catalytic mechanism. NAD(+) contacts are provided by arginine 143, glutamate 178, lysine 295, and lysine 319. Zn(2+) contacts are provided by cysteine 413, cysteine 416, cysteine 431, and cysteine 436. The BRCT domain maps to 596-675 (GVPQTFAGKT…ADFLQLIDRV (80 aa)).

This sequence belongs to the NAD-dependent DNA ligase family. LigA subfamily. Mg(2+) is required as a cofactor. Mn(2+) serves as cofactor.

It carries out the reaction NAD(+) + (deoxyribonucleotide)n-3'-hydroxyl + 5'-phospho-(deoxyribonucleotide)m = (deoxyribonucleotide)n+m + AMP + beta-nicotinamide D-nucleotide.. Functionally, DNA ligase that catalyzes the formation of phosphodiester linkages between 5'-phosphoryl and 3'-hydroxyl groups in double-stranded DNA using NAD as a coenzyme and as the energy source for the reaction. It is essential for DNA replication and repair of damaged DNA. The sequence is that of DNA ligase from Heliobacterium modesticaldum (strain ATCC 51547 / Ice1).